A 248-amino-acid polypeptide reads, in one-letter code: 2,3-bisphosphoglycerate-dependent phosphoglycerate mutase (248 aa).

Residues 8–15 (RHGESVWN), 21–22 (TG), Arg-60, 87–90 (ERHY), Lys-98, 114–115 (RR), and 183–184 (GN) each bind substrate. The active-site Tele-phosphohistidine intermediate is the His-9. Glu-87 serves as the catalytic Proton donor/acceptor.

Belongs to the phosphoglycerate mutase family. BPG-dependent PGAM subfamily.

The enzyme catalyses (2R)-2-phosphoglycerate = (2R)-3-phosphoglycerate. It functions in the pathway carbohydrate degradation; glycolysis; pyruvate from D-glyceraldehyde 3-phosphate: step 3/5. Its function is as follows. Catalyzes the interconversion of 2-phosphoglycerate and 3-phosphoglycerate. This is 2,3-bisphosphoglycerate-dependent phosphoglycerate mutase from Brachyspira hyodysenteriae (strain ATCC 49526 / WA1).